A 142-amino-acid polypeptide reads, in one-letter code: Lysozyme 2 (142 aa).

The N-terminal stretch at 1–20 is a signal peptide; it reads MLKLTLTILAAVLLVTPAFG. In terms of domain architecture, C-type lysozyme spans 21–142; that stretch reads KVYTRCSLAR…HTLPSIDDCF (122 aa). Cystine bridges form between C26-C141, C47-C131, C82-C98, and C94-C112. Residue E52 is part of the active site. A glycan (N-linked (GlcNAc...) asparagine) is linked at N66. D70 is an active-site residue.

This sequence belongs to the glycosyl hydrolase 22 family. Expressed only in the midgut where it is concentrated around the middle in all larval stages.

It is found in the secreted. The enzyme catalyses Hydrolysis of (1-&gt;4)-beta-linkages between N-acetylmuramic acid and N-acetyl-D-glucosamine residues in a peptidoglycan and between N-acetyl-D-glucosamine residues in chitodextrins.. Its function is as follows. Lysozymes have primarily a bacteriolytic function. Shows antibacterial activity against Gram-positive bacterium M.luteus but shows no activity against Gram-negative bacterium E.coli. Likely to play a role in the eradication of ingested pathogens during their passage through the intestine. This chain is Lysozyme 2, found in Lucilia sericata (Green bottle fly).